A 216-amino-acid chain; its full sequence is Protein-L-isoaspartate O-methyltransferase (216 aa).

The active site involves S60.

It belongs to the methyltransferase superfamily. L-isoaspartyl/D-aspartyl protein methyltransferase family.

It localises to the cytoplasm. The enzyme catalyses [protein]-L-isoaspartate + S-adenosyl-L-methionine = [protein]-L-isoaspartate alpha-methyl ester + S-adenosyl-L-homocysteine. Its function is as follows. Catalyzes the methyl esterification of L-isoaspartyl residues in peptides and proteins that result from spontaneous decomposition of normal L-aspartyl and L-asparaginyl residues. It plays a role in the repair and/or degradation of damaged proteins. This chain is Protein-L-isoaspartate O-methyltransferase, found in Methanococcus aeolicus (strain ATCC BAA-1280 / DSM 17508 / OCM 812 / Nankai-3).